Here is a 415-residue protein sequence, read N- to C-terminus: 8-amino-7-oxononanoate synthase (415 aa).

Position 21 (Arg21) interacts with substrate. Residue 117–118 participates in pyridoxal 5'-phosphate binding; that stretch reads GY. Residue His149 participates in substrate binding. Ser195, His223, and Thr251 together coordinate pyridoxal 5'-phosphate. Lys254 bears the N6-(pyridoxal phosphate)lysine mark. Thr374 contributes to the substrate binding site.

This sequence belongs to the class-II pyridoxal-phosphate-dependent aminotransferase family. BioF subfamily. As to quaternary structure, homodimer. The cofactor is pyridoxal 5'-phosphate.

It catalyses the reaction 6-carboxyhexanoyl-[ACP] + L-alanine + H(+) = (8S)-8-amino-7-oxononanoate + holo-[ACP] + CO2. The protein operates within cofactor biosynthesis; biotin biosynthesis. Its function is as follows. Catalyzes the decarboxylative condensation of pimeloyl-[acyl-carrier protein] and L-alanine to produce 8-amino-7-oxononanoate (AON), [acyl-carrier protein], and carbon dioxide. The sequence is that of 8-amino-7-oxononanoate synthase from Ralstonia pickettii (strain 12J).